We begin with the raw amino-acid sequence, 412 residues long: Eukaryotic initiation factor 4A-1 (412 aa).

The residue at position 2 (Ala-2) is an N-acetylalanine. Residues 39 to 67 carry the Q motif motif; it reads ESFDAMGLQENLLRGIYAYGFEKPSAIQQ. Residues 70–240 form the Helicase ATP-binding domain; it reads IVPFCKGLDV…RKFMSKPVRI (171 aa). ATP is bound at residue 83–90; that stretch reads AQSGTGKT. Ser-104 carries the phosphoserine modification. Thr-145 carries the phosphothreonine modification. The DEAD box signature appears at 188 to 191; that stretch reads DEAD. Residues 251–412 form the Helicase C-terminal domain; sequence GIKQFYVNVE…ELPSNVADLL (162 aa).

Belongs to the DEAD box helicase family. eIF4A subfamily. EIF4F is a multi-subunit complex, the composition of which varies with external and internal environmental conditions. It is composed of at least EIF4A, EIF4E and EIF4G. Interacts with CDKA-1. Interacts with MRF1, MRF2, MRF3/ECIP1 and MRF4. In terms of tissue distribution, highly expressed in the whole plant.

Its subcellular location is the cytoplasm. It catalyses the reaction ATP + H2O = ADP + phosphate + H(+). Functionally, ATP-dependent RNA helicase which is a subunit of the eIF4F complex involved in cap recognition and is required for mRNA binding to ribosome. In the current model of translation initiation, eIF4A unwinds RNA secondary structures in the 5'-UTR of mRNAs which is necessary to allow efficient binding of the small ribosomal subunit, and subsequent scanning for the initiator codon. The polypeptide is Eukaryotic initiation factor 4A-1 (Arabidopsis thaliana (Mouse-ear cress)).